The primary structure comprises 554 residues: uncharacterized protein (554 aa).

To M.jannaschii MJ0047, MJ0162 and MJ1236.

This is an uncharacterized protein from Synechocystis sp. (strain ATCC 27184 / PCC 6803 / Kazusa).